Reading from the N-terminus, the 358-residue chain is MFREVIRTISPYIPGKPISEVKRELGLEKVIKLASNENPLGPSENVKKAIKESLDDLSLYPDGNCTELKLKLAKKLNVKPTQIIFGAGSDEITQLIASIFINPGDNSIMARPSFPRYETVTKVMGGIPIEIPLKNYTHDLEEFSKHINERTRVIWICNPNNPTGTIVKKDELYNFIKSVPSEIAVVVDQAYKEYIDDPEYPDAIHWLDEFKNLIVLQTFSKIYGLASLRIGYAIASEEIIEKLNRVRPPFNVNHVAQIAAIAALDDQEHIEKAKELNKKSLEFFYKSFEEMKLPYIKSYGNFVMVDVTKDAVEVFKKLLLKGIIVRPGDIFDMPTYIRVTTGLESDNMEFIKALKEVL.

Lys-221 is modified (N6-(pyridoxal phosphate)lysine).

This sequence belongs to the class-II pyridoxal-phosphate-dependent aminotransferase family. Histidinol-phosphate aminotransferase subfamily. Homodimer. It depends on pyridoxal 5'-phosphate as a cofactor.

It carries out the reaction L-histidinol phosphate + 2-oxoglutarate = 3-(imidazol-4-yl)-2-oxopropyl phosphate + L-glutamate. Its pathway is amino-acid biosynthesis; L-histidine biosynthesis; L-histidine from 5-phospho-alpha-D-ribose 1-diphosphate: step 7/9. The protein is Histidinol-phosphate aminotransferase of Caldicellulosiruptor saccharolyticus (strain ATCC 43494 / DSM 8903 / Tp8T 6331).